The primary structure comprises 456 residues: uncharacterized protein (456 aa).

In terms of domain architecture, TRAM spans 2-60; that stretch reads AMRKGKEYELNIEEIEFPSMGIAYHEGLKVYVKHGIPGQKVLARITTKKKDHAKGKIIE. Positions 73, 79, 82, and 162 each coordinate [4Fe-4S] cluster. Glutamine 288, tyrosine 317, glutamate 338, and aspartate 383 together coordinate S-adenosyl-L-methionine. Cysteine 410 acts as the Nucleophile in catalysis.

The protein belongs to the class I-like SAM-binding methyltransferase superfamily. RNA M5U methyltransferase family.

This is an uncharacterized protein from Clostridium tetani (strain Massachusetts / E88).